Consider the following 467-residue polypeptide: MATTVTLKSFTGLRQSSTEQTNFVSHVPSSLSLPQRRTSLRVTAARATPKLSNRKLRVAVIGGGPAGGAAAETLAQGGIETILIERKMDNCKPCGGAIPLCMVGEFNLPLDIIDRRVTKMKMISPSNIAVDIGRTLKEHEYIGMVRREVLDAYLRERAEKSGATVINGLFLKMDHPENWDSPYTLHYTEYDGKTGATGTKKTMEVDAVIGADGANSRVAKSIDAGDYDYAIAFQERIRIPDEKMTYYEDLAEMYVGDDVSPDFYGWVFPKCDHVAVGTGTVTHKGDIKKFQLATRNRAKDKILGGKIIRVEAHPIPEHPRPRRLSKRVALVGDAAGYVTKCSGEGIYFAAKSGRMCAEAIVEGSQNGKKMIDEGDLRKYLEKWDKTYLPTYRVLDVLQKVFYRSNPAREAFVEMCNDEYVQKMTFDSYLYKRVAPGSPLEDIKLAVNTIGSLVRANALRREIEKLSV.

A chloroplast-targeting transit peptide spans 1-43; the sequence is MATTVTLKSFTGLRQSSTEQTNFVSHVPSSLSLPQRRTSLRVT.

Belongs to the geranylgeranyl reductase family. ChlP subfamily. In terms of assembly, part of the FLU-containing chloroplast membrane complex composed of FLU, CRD1, PORB, PORC, CHLP and HEMA1.

Its subcellular location is the plastid. It is found in the chloroplast membrane. It carries out the reaction phytyl diphosphate + 3 NADP(+) = geranylgeranyl diphosphate + 3 NADPH + 3 H(+). It functions in the pathway porphyrin-containing compound metabolism; chlorophyll biosynthesis. The protein operates within cofactor biosynthesis; tocopherol biosynthesis. In terms of biological role, catalyzes the reduction of geranylgeranyl diphosphate to phytyl diphosphate, providing phytol for both tocopherol and chlorophyll synthesis. The protein is Geranylgeranyl diphosphate reductase, chloroplastic (CHLP) of Arabidopsis thaliana (Mouse-ear cress).